Here is a 373-residue protein sequence, read N- to C-terminus: Diels-Alderase (373 aa).

This sequence belongs to the Diels-Alderase family.

The enzyme catalyses (5S)-3-[(2E,6R,8E,10E,12E)-2,6-dimethyltetradeca-2,8,10,12-tetraenoyl]-5-(hydroxymethyl)pyrrolidine-2,4-dione = trichosetin. It participates in mycotoxin biosynthesis. In terms of biological role, hybrid PKS-NRPS synthetase; part of the gene cluster that mediates the biosynthesis of trichosetin, a trans-fused decalin-containing tetramic acid with antimicrobial activity. The PKS module of PKS-NRPS1 together with the enoylreductase (ER) catalyze the formation of the polyketide unit which is then conjugated to L-serine by the condensation domain of the PKS-NRPS1 NRPS module. Activity of the Dieckmann cyclase domain (RED) results in release of the Dieckmann product intermediate. Diels-Alderase (DA) is involved in endo-selective Diels-Alder cycloaddition to form the decalin ring, leading to the production of N-desmethylequisetin also called trichosetin. The cluster does not contain the equisetin N-methyltransferase and consequently, trichosetin is isolated as final product. The chain is Diels-Alderase from Gibberella fujikuroi (strain CBS 195.34 / IMI 58289 / NRRL A-6831) (Bakanae and foot rot disease fungus).